We begin with the raw amino-acid sequence, 233 residues long: Small ribosomal subunit protein uS3 (233 aa).

The KH type-2 domain occupies 39 to 107; sequence VRTFLTKELK…PAQINISEVR (69 aa).

It belongs to the universal ribosomal protein uS3 family. Part of the 30S ribosomal subunit. Forms a tight complex with proteins S10 and S14.

Binds the lower part of the 30S subunit head. Binds mRNA in the 70S ribosome, positioning it for translation. This is Small ribosomal subunit protein uS3 from Pseudoalteromonas translucida (strain TAC 125).